Here is a 92-residue protein sequence, read N- to C-terminus: Small ribosomal subunit protein uS19c (92 aa).

Belongs to the universal ribosomal protein uS19 family.

It is found in the plastid. It localises to the chloroplast. Functionally, protein S19 forms a complex with S13 that binds strongly to the 16S ribosomal RNA. This Lobularia maritima (Sweet alyssum) protein is Small ribosomal subunit protein uS19c.